Reading from the N-terminus, the 386-residue chain is 3-hydroxyisobutyryl-CoA hydrolase, mitochondrial (386 aa).

A mitochondrion-targeting transit peptide spans 1 to 32 (MGQREMWRLMSRFNAFKRTNTILHHLRMSKHT). Residues Lys55 and Lys92 each carry the N6-acetyllysine; alternate modification. Residues Lys55 and Lys92 each carry the N6-succinyllysine; alternate modification. Positions 121, 146, 169, and 177 each coordinate substrate. Lys221 carries the post-translational modification N6-acetyllysine; alternate. Lys221 is subject to N6-succinyllysine; alternate. Ser234 is subject to Phosphoserine. Lys257 carries the N6-succinyllysine modification. Lys297 is modified (N6-acetyllysine; alternate). Lys297 is subject to N6-succinyllysine; alternate. The residue at position 301 (Lys301) is an N6-succinyllysine. Residue Lys353 is modified to N6-acetyllysine; alternate. At Lys353 the chain carries N6-succinyllysine; alternate. At Ser356 the chain carries Phosphoserine. An N6-acetyllysine mark is found at Lys360 and Lys365. Lys377 carries the post-translational modification N6-succinyllysine.

It belongs to the enoyl-CoA hydratase/isomerase family. In terms of tissue distribution, highly expressed in liver and kidney, also detected in heart, muscle and brain (at protein level). Not detected in lung.

It localises to the mitochondrion. It carries out the reaction 3-hydroxy-2-methylpropanoyl-CoA + H2O = 3-hydroxy-2-methylpropanoate + CoA + H(+). The protein operates within amino-acid degradation; L-valine degradation. In terms of biological role, hydrolyzes 3-hydroxyisobutyryl-CoA (HIBYL-CoA), a saline catabolite. Has high activity toward isobutyryl-CoA. Could be an isobutyryl-CoA dehydrogenase that functions in valine catabolism. Also hydrolyzes 3-hydroxypropanoyl-CoA. In Homo sapiens (Human), this protein is 3-hydroxyisobutyryl-CoA hydrolase, mitochondrial (HIBCH).